Here is a 1230-residue protein sequence, read N- to C-terminus: ATP-dependent helicase/nuclease subunit A (1230 aa).

One can recognise a UvrD-like helicase ATP-binding domain in the interval 9-480; sequence STWTDDQWKA…IDLNKNFRSR (472 aa). 30-37 lines the ATP pocket; it reads AAAGSGKT. Residues 507-796 enclose the UvrD-like helicase C-terminal domain; that stretch reads QAELKLGASY…RLMTIHSSKG (290 aa).

Belongs to the helicase family. AddA subfamily. In terms of assembly, heterodimer of AddA and AddB/RexB. It depends on Mg(2+) as a cofactor.

It catalyses the reaction Couples ATP hydrolysis with the unwinding of duplex DNA by translocating in the 3'-5' direction.. The enzyme catalyses ATP + H2O = ADP + phosphate + H(+). The heterodimer acts as both an ATP-dependent DNA helicase and an ATP-dependent, dual-direction single-stranded exonuclease. Recognizes the chi site generating a DNA molecule suitable for the initiation of homologous recombination. The AddA nuclease domain is required for chi fragment generation; this subunit has the helicase and 3' -&gt; 5' nuclease activities. The sequence is that of ATP-dependent helicase/nuclease subunit A from Bacillus licheniformis (strain ATCC 14580 / DSM 13 / JCM 2505 / CCUG 7422 / NBRC 12200 / NCIMB 9375 / NCTC 10341 / NRRL NRS-1264 / Gibson 46).